The chain runs to 124 residues: Urease subunit beta (124 aa).

Belongs to the urease beta subunit family. In terms of assembly, heterotrimer of UreA (gamma), UreB (beta) and UreC (alpha) subunits. Three heterotrimers associate to form the active enzyme.

It is found in the cytoplasm. It carries out the reaction urea + 2 H2O + H(+) = hydrogencarbonate + 2 NH4(+). It participates in nitrogen metabolism; urea degradation; CO(2) and NH(3) from urea (urease route): step 1/1. This chain is Urease subunit beta, found in Halalkalibacterium halodurans (strain ATCC BAA-125 / DSM 18197 / FERM 7344 / JCM 9153 / C-125) (Bacillus halodurans).